The primary structure comprises 161 residues: NADH-quinone oxidoreductase subunit C (161 aa).

This sequence belongs to the complex I 30 kDa subunit family. NDH-1 is composed of 14 different subunits. Subunits NuoB, C, D, E, F, and G constitute the peripheral sector of the complex.

It is found in the cell inner membrane. The enzyme catalyses a quinone + NADH + 5 H(+)(in) = a quinol + NAD(+) + 4 H(+)(out). Functionally, NDH-1 shuttles electrons from NADH, via FMN and iron-sulfur (Fe-S) centers, to quinones in the respiratory chain. The immediate electron acceptor for the enzyme in this species is believed to be ubiquinone. Couples the redox reaction to proton translocation (for every two electrons transferred, four hydrogen ions are translocated across the cytoplasmic membrane), and thus conserves the redox energy in a proton gradient. The protein is NADH-quinone oxidoreductase subunit C of Citrifermentans bemidjiense (strain ATCC BAA-1014 / DSM 16622 / JCM 12645 / Bem) (Geobacter bemidjiensis).